Consider the following 425-residue polypeptide: Histidine--tRNA ligase (425 aa).

It belongs to the class-II aminoacyl-tRNA synthetase family. Homodimer.

The protein localises to the cytoplasm. It carries out the reaction tRNA(His) + L-histidine + ATP = L-histidyl-tRNA(His) + AMP + diphosphate + H(+). The chain is Histidine--tRNA ligase from Streptomyces coelicolor (strain ATCC BAA-471 / A3(2) / M145).